The following is a 520-amino-acid chain: Ribonuclease Y (520 aa).

The chain crosses the membrane as a helical span at residues 5–25; it reads ITIISSLLFLIVGLVVGSLIF. A disordered region spans residues 76 to 127; that stretch reads ELRGRRTETQKAENRLLQREENLDRKDTSLSKREATLERKEESISKRQQQIE. The region spanning 210-273 is the KH domain; sequence TVSVVTLPND…EIARIALEKL (64 aa). In terms of domain architecture, HD spans 336 to 429; the sequence is VLNHSLEVSK…VAAADALSAA (94 aa).

This sequence belongs to the RNase Y family.

Its subcellular location is the cell membrane. Endoribonuclease that initiates mRNA decay. This is Ribonuclease Y from Listeria monocytogenes serotype 1/2a (strain 10403S).